A 258-amino-acid chain; its full sequence is Pimeloyl-[acyl-carrier protein] methyl ester esterase (258 aa).

Positions 16 to 242 (LVLLHGWGLN…AAHAPFISHP (227 aa)) constitute an AB hydrolase-1 domain. Residues W22, 82–83 (SM), and 143–147 (FLALQ) each bind substrate. Residue S82 is the Nucleophile of the active site. Active-site residues include D207 and H235. Residue H235 participates in substrate binding.

The protein belongs to the AB hydrolase superfamily. Carboxylesterase BioH family. Monomer.

The protein resides in the cytoplasm. It carries out the reaction 6-carboxyhexanoyl-[ACP] methyl ester + H2O = 6-carboxyhexanoyl-[ACP] + methanol + H(+). Its pathway is cofactor biosynthesis; biotin biosynthesis. Its function is as follows. The physiological role of BioH is to remove the methyl group introduced by BioC when the pimeloyl moiety is complete. It allows to synthesize pimeloyl-ACP via the fatty acid synthetic pathway through the hydrolysis of the ester bonds of pimeloyl-ACP esters. The protein is Pimeloyl-[acyl-carrier protein] methyl ester esterase of Yersinia pseudotuberculosis serotype IB (strain PB1/+).